The sequence spans 602 residues: Leucine-rich repeat-containing protein 40 (602 aa).

Residues 1–22 (MSRLKRIAGQDPRAGFKEGGRD) are disordered. Ser-71 bears the Phosphoserine mark. LRR repeat units lie at residues 83-104 (DLTKLIISNNKLQSLTDDLRLL), 106-127 (ALTVLDIHDNQLTSLPSAIREL), 129-150 (NLQKLNVSHNKLKILPEEITNL), 152-173 (NLKCLYLQHNELTCISEGFEQF), 175-196 (NLEDLDLSNNRLTTVPASFSSL), 198-219 (SLVRLNLSSNELKSLPAEINRM), 221-242 (RLKHLDCNSNLLETIPPELAGM), 244-265 (SLELLYLRRNKLRFLPEFPSCS), 266-286 (LLKELHVGENQIEMLEAEHLK), 290-311 (SILVLDLRDNKLKSVPDEIILL), 313-335 (SLERLDLSNNDISSLPYSLGNLH), 336-356 (LKFLALEGNPLRTIRREIINK), 400-421 (TLKILDYSDKQATLIPDEVFDA), 426-447 (IITSINFSKNQLCEIPKRMVEL), 450-472 (MVSDVNLSFNKLSFISLELCVLQ), 473-494 (KLTFLDLRNNFLNSLPEEVESL), 496-517 (RLQTINLSFNRFKMLPEVLYRI), 519-540 (TLETILISNNQVGSVDPQKMKM), 543-564 (NLTTLDLQNNDLLQIPPELGNC), and 566-586 (NLRTLLLDGNPFRVPRAAILM).

The protein is Leucine-rich repeat-containing protein 40 (LRRC40) of Pongo abelii (Sumatran orangutan).